The primary structure comprises 1496 residues: MAEERPPRLVDYFVVAGLAGNGAPIPEETWVPEPSGPLRPPRPAEPITDVAVIARALGEEVPQGYTCIQASAGGHPLELSAGLLGGTQPVICYRRGRDKPPLVELGVLYEGKERPKPGFQVLDTTPYSHSANLAPPGPGHPRTYLTYRRAAEGAGLHALGITDLCLVLPSKGEGTPHTYCRLPRNLNPGMWGPAVYLCYKVGLAKANTLVYEAELLGRYPEEDNEAFPLPESVPVFCLPMGATIECWPAQTKYPVPVFSTFVLTGAAGDKVYGAALQFYEAFPRARLSERQARALGLLSAVERGRALGGRAVRSRRAIAVLSRWPAFPAFRAFLTFLYRYSVSGPHRLPLEAHISHFIHNVPFPSPQRPRILVQMSPYDNLLLCQPVSSPLPLSGASFLQLLQSLGPELAITLLLAVLTEHKLLVHSLRPDLLTSVCEALVSMIFPLHWQCPYIPLCPLVLADVLSAPVPFIVGIHSSYFDLHDPPADVICVDLDTNTLFQTEEKKLLSPRTLPRRPYKVLLATLTNLYQQLDQTYTGPEEEASLEFLLTDYEAVCGRRARLEREVQGAFLRFMACLLKGYRVFLRPLTQAPSEGARDVDNLFFLQGFLKSRERSSHKLYSQLLHTQMFSQFIEECSFGSARHAALEFFDSCVEKVHPEQEKPEPTPLVELEELSGSELTVFITPPEEPALPEGSESTPQYCYDGFPELRAELFESLQEQPGALPVPGPSRSAPSSPAPRRTKQEMKVAQRMAQKSAAVPELWARCLLGHCYGLWFLCLPAYVRSAPSRVQALHTAYHVLRQMESGKVVLPDEVCYRVLMQLCSHYGQPVLSVRVMLEMRQAGIVPNTITYGYYNKAVLESKWPSGTPGGRLRWAKLRNVVLGAAQFRQPLRERQQQQQQQQQQQQQQQQEQVSAHQEAGSSQAEPYLERPSPTRPLQRQTTWAGRSLRDPASPPGRLVKSGSLGSARGAQPTVEAGVAHMIEALGVLEPRGSPVPWHDGSLSDLSLTGEEPLPGGSPGGSGSALSAQSTEALEGLSGRGPKAGGRQDEAGTPRRGLGARLQQLLTPSRHSPASRIPPPELPPDLPPPARRSPMDSLLHPRERPGSTASESSASLGSEWDLSESSLSNLSLRRSSERLSDTPGSFQSPSLEILLSSCSLCRACDSLVYDEEIMAGWAPDDSNLNTTCPFCACPFVPLLSVQTLDSRPSVPSPKSAGASGSKDAPVPGGPGPVLSDRRLCLALDEPQLCNGHMGGASRRVESGAWAYLSPLVLRKELESLVENEGSEVLALPELPSAHPIIFWNLLWYFQRLRLPSILPGLVLASCDGPSHSQAPSPWLTPDPASVQVRLLWDVLTPDPNSCPPLYVLWRVHSQIPQRVVWPGPVPASLSLALLESVLRHVGLNEVHKAVGLLLETLGPPPTGLHLQRGIYREILFLTMAALGKDHVDIVAFDKKYKSAFNKLASSMGKEELRHRRAQMPTPKAIDCRKCFGAPPEC.

An MABP domain is found at Ala-44 to Leu-203. The uDENN domain occupies Val-195 to Pro-369. The region spanning Pro-390–Thr-526 is the cDENN domain. The dDENN domain occupies Leu-528–Ala-644. The disordered stretch occupies residues Gln-720–Gln-744. Residues Pro-729–Pro-739 are compositionally biased toward low complexity. PPR repeat units follow at residues Trp-775–Pro-811 and Asp-812–Pro-846. Disordered regions lie at residues Leu-891–Ala-970, Val-995–Arg-1055, Pro-1067–Trp-1119, and Ser-1205–Gly-1227. Low complexity predominate over residues Gln-896–Gln-912. 2 stretches are compositionally biased toward polar residues: residues Val-913–Ala-924 and Arg-935–Ala-944. Ser-953 bears the Phosphoserine mark. Over residues Arg-1075–Arg-1090 the composition is skewed to pro residues. Position 1092 is a phosphoserine (Ser-1092). Positions Gly-1105–Trp-1119 are enriched in low complexity.

It is found in the golgi apparatus. Its function is as follows. Guanine nucleotide exchange factor (GEF) which may activate RAB10. Promotes the exchange of GDP to GTP, converting inactive GDP-bound Rab proteins into their active GTP-bound form. The protein is DENN domain-containing protein 4B (DENND4B) of Homo sapiens (Human).